Here is a 98-residue protein sequence, read N- to C-terminus: NADH-ubiquinone oxidoreductase chain 4L (98 aa).

The next 3 helical transmembrane spans lie at 1–21, 29–49, and 61–81; these read MSMV…GLLM, SLLC…LTIL, and IILL…LVMV.

It belongs to the complex I subunit 4L family. Core subunit of respiratory chain NADH dehydrogenase (Complex I) which is composed of 45 different subunits.

The protein localises to the mitochondrion inner membrane. The catalysed reaction is a ubiquinone + NADH + 5 H(+)(in) = a ubiquinol + NAD(+) + 4 H(+)(out). In terms of biological role, core subunit of the mitochondrial membrane respiratory chain NADH dehydrogenase (Complex I) which catalyzes electron transfer from NADH through the respiratory chain, using ubiquinone as an electron acceptor. Part of the enzyme membrane arm which is embedded in the lipid bilayer and involved in proton translocation. This chain is NADH-ubiquinone oxidoreductase chain 4L (MT-ND4L), found in Bos mutus grunniens (Wild yak).